The primary structure comprises 276 residues: Shikimate dehydrogenase (NADP(+)) (276 aa).

Shikimate-binding positions include 18–20 (SRS) and threonine 65. The active-site Proton acceptor is the lysine 69. Positions 90 and 106 each coordinate shikimate. Residues 132–136 (GAGGA) and isoleucine 221 contribute to the NADP(+) site. Tyrosine 223 serves as a coordination point for shikimate. Position 244 (glycine 244) interacts with NADP(+).

Belongs to the shikimate dehydrogenase family. Homodimer.

It catalyses the reaction shikimate + NADP(+) = 3-dehydroshikimate + NADPH + H(+). It participates in metabolic intermediate biosynthesis; chorismate biosynthesis; chorismate from D-erythrose 4-phosphate and phosphoenolpyruvate: step 4/7. Involved in the biosynthesis of the chorismate, which leads to the biosynthesis of aromatic amino acids. Catalyzes the reversible NADPH linked reduction of 3-dehydroshikimate (DHSA) to yield shikimate (SA). The protein is Shikimate dehydrogenase (NADP(+)) of Paramagnetospirillum magneticum (strain ATCC 700264 / AMB-1) (Magnetospirillum magneticum).